The primary structure comprises 245 residues: Probable ABC transporter permease protein HI_0355 (245 aa).

6 consecutive transmembrane segments (helical) span residues 9-29, 61-81, 92-112, 115-135, 170-190, and 217-237; these read LLIVGVLLMIWQMVATLGSFP, ICLGLLLGFLFGLISALLLSF, ILVISQAIPVFAIAPLLVLWF, GMASKIVMSVLIIYFPVTAAC, LPAFASGLRIAVSVAPIGAVV, and FAALLILVSISLCLYFSIDWL. Residues 50–234 enclose the ABC transmembrane type-1 domain; it reads LWQHTQVTLL…SISLCLYFSI (185 aa).

It belongs to the binding-protein-dependent transport system permease family. CysTW subfamily.

Its subcellular location is the cell inner membrane. Its function is as follows. Probably part of a binding-protein-dependent transport system. Probably responsible for the translocation of the substrate across the membrane. In Haemophilus influenzae (strain ATCC 51907 / DSM 11121 / KW20 / Rd), this protein is Probable ABC transporter permease protein HI_0355.